The primary structure comprises 163 residues: SKP1-like protein 3 (163 aa).

An interaction with the F-box domain of F-box proteins region spans residues 105–163; that stretch reads LRAANYLNISGLLDLTCKAVADQMRGKTPAQMREHFNIKNDYTPEEEAEVRNENRWAFE.

Belongs to the SKP1 family. As to quaternary structure, part of a SCF (SKP1-cullin-F-box) protein ligase complex. Interacts with ADO3/FKF1 and At3g61590. In terms of tissue distribution, highly expressed in siliques.

The protein resides in the nucleus. Its pathway is protein modification; protein ubiquitination. Functionally, involved in ubiquitination and subsequent proteasomal degradation of target proteins. Together with CUL1, RBX1 and a F-box protein, it forms a SCF E3 ubiquitin ligase complex. The functional specificity of this complex depends on the type of F-box protein. In the SCF complex, it serves as an adapter that links the F-box protein to CUL1. The protein is SKP1-like protein 3 (ASK3) of Arabidopsis thaliana (Mouse-ear cress).